We begin with the raw amino-acid sequence, 101 residues long: Urease subunit beta (101 aa).

This sequence belongs to the urease beta subunit family. Heterotrimer of UreA (gamma), UreB (beta) and UreC (alpha) subunits. Three heterotrimers associate to form the active enzyme.

The protein localises to the cytoplasm. The enzyme catalyses urea + 2 H2O + H(+) = hydrogencarbonate + 2 NH4(+). Its pathway is nitrogen metabolism; urea degradation; CO(2) and NH(3) from urea (urease route): step 1/1. This Sinorhizobium fredii (strain NBRC 101917 / NGR234) protein is Urease subunit beta.